A 420-amino-acid chain; its full sequence is MADLSKKYCVYCLADVTSLRLRCTECQDIELCTDCFSAGAEIGNHRRWHGYQLVDGGRFTLWGPEAEGGWTSREEQLLLDAIEQFGFGNWEDMAAHVGASRTPTEVMEHYVTMYIHGNLGKACIPDSIPNRVTDHTCPTGGPLSPSLTTPLPTLDLTVADQQQLGYMPLRDDYEIEFDQEAETLISGLSVNYDDDDVEVELKEAYVDMYVRKLKERQRRKSLARDYNLVPAFLGKDKKEKEKPAKRKISKEEKELRLKLRPLYQFMSNKEIEDCFENMHKERMLRAKIRELQRYRRNGITKTEESAEYEAARHKREKRKENKNIANSKRGREDGKESEFAAIENLAGFELLSDREKVLCSSLNLSPTRYLTVKTIIIKDHLQKRQGIPSKSRLPSYLDKVLKKRILNFLTESGWISRDAS.

The ZZ-type zinc finger occupies 4 to 59 (LSKKYCVYCLADVTSLRLRCTECQDIELCTDCFSAGAEIGNHRRWHGYQLVDGGRF). Positions 9, 12, 23, 26, 32, 35, 45, and 49 each coordinate Zn(2+). The 54-residue stretch at 65-118 (EAEGGWTSREEQLLLDAIEQFGFGNWEDMAAHVGASRTPTEVMEHYVTMYIHGN) folds into the SANT domain. The tract at residues 303–333 (EESAEYEAARHKREKRKENKNIANSKRGRED) is disordered.

Its subcellular location is the nucleus. In terms of biological role, transcriptional coactivator. In Xenopus laevis (African clawed frog), this protein is Transcriptional adapter 2-beta (tada2b).